The sequence spans 447 residues: Voltage-gated purine nucleotide uniporter SLC17A9 (447 aa).

The tract at residues 1 to 26 is disordered; it reads MPSQRSSLMQPIPEETRKTPSAAAED. Transmembrane regions (helical) follow at residues 40 to 60, 74 to 94, 103 to 123, 129 to 149, 169 to 189, 192 to 212, 252 to 272, 287 to 307, 327 to 347, 380 to 400, and 413 to 433; these read ILLLGTCLLYCARVTMPVCTV, GIVLSSFFWGYCLTQVVGGHL, VILLSASAWGFITVTTPLLAH, LAFLTFSRILTGLLQGVYFPA, TVGAGSQVGTLVTGGVGSVLL, CGWQSVFYFSGGLTLLWAYYV, VWAAICSQLCSACSFFILLSW, WVFNVVPWMLAIPASLFSGFI, VMGLGLSSIFALCLGHTTSFL, GFLFGVANTAGALAGVVGVCL, and CVFHLVAIISNLGLGTFLVFG.

This sequence belongs to the major facilitator superfamily. Sodium/anion cotransporter family. As to expression, in brain, specifically expressed in the medulla and is associated with chromaffin granules (at protein level). Predominantly expressed in adrenal gland, brain and thyroid.

The protein resides in the cytoplasmic vesicle. It is found in the secretory vesicle. It localises to the chromaffin granule membrane. The protein localises to the secretory vesicle membrane. Its subcellular location is the lysosome membrane. The enzyme catalyses ATP(in) = ATP(out). The catalysed reaction is ADP(in) = ADP(out). It carries out the reaction GTP(in) = GTP(out). Its activity is regulated as follows. Activity is chloride-dependent. Its function is as follows. Voltage-gated ATP nucleotide uniporter that can also transport the purine nucleotides ADP and GTP. Uses the membrane potential as the driving force to control ATP accumulation in lysosomes and secretory vesicles. By controlling ATP storage in lysosomes, regulates ATP-dependent proteins of these organelles. Also indirectly regulates the exocytosis of ATP through its import into lysosomes in astrocytes and secretory vesicles such as adrenal chromaffin granules, mucin granules and synaptic vesicles. The sequence is that of Voltage-gated purine nucleotide uniporter SLC17A9 from Mus musculus (Mouse).